Consider the following 184-residue polypeptide: ADP-ribosylation factor-like protein 3 (184 aa).

G2 carries N-myristoyl glycine lipidation. GTP is bound by residues G24–T31, D68–Q72, and N127–D130.

It belongs to the small GTPase superfamily. Arf family.

The protein resides in the golgi apparatus. Its function is as follows. GTP-binding protein that may be involved in protein trafficking; may modulate vesicle budding and uncoating within the Golgi apparatus. This Caenorhabditis elegans protein is ADP-ribosylation factor-like protein 3 (arl-3).